A 576-amino-acid chain; its full sequence is DNA mismatch repair protein MutL (576 aa).

Belongs to the DNA mismatch repair MutL/HexB family.

In terms of biological role, this protein is involved in the repair of mismatches in DNA. It is required for dam-dependent methyl-directed DNA mismatch repair. May act as a 'molecular matchmaker', a protein that promotes the formation of a stable complex between two or more DNA-binding proteins in an ATP-dependent manner without itself being part of a final effector complex. In Chlamydia trachomatis serovar L2 (strain ATCC VR-902B / DSM 19102 / 434/Bu), this protein is DNA mismatch repair protein MutL.